Here is a 386-residue protein sequence, read N- to C-terminus: Cobalt-precorrin-5B C(1)-methyltransferase (386 aa).

This sequence belongs to the CbiD family.

It catalyses the reaction Co-precorrin-5B + S-adenosyl-L-methionine = Co-precorrin-6A + S-adenosyl-L-homocysteine. Its pathway is cofactor biosynthesis; adenosylcobalamin biosynthesis; cob(II)yrinate a,c-diamide from sirohydrochlorin (anaerobic route): step 6/10. Functionally, catalyzes the methylation of C-1 in cobalt-precorrin-5B to form cobalt-precorrin-6A. This is Cobalt-precorrin-5B C(1)-methyltransferase from Prochlorococcus marinus (strain MIT 9303).